Reading from the N-terminus, the 83-residue chain is Neurotoxin LmNaTx10 (83 aa).

The first 19 residues, 1-19, serve as a signal peptide directing secretion; the sequence is MNFLIFIAVASSLALGALC. An LCN-type CS-alpha/beta domain is found at 21–80; sequence KEGYPYDGNNCRYICFRNQYCDDLCKKLKGESGYCYGWNQSCYCYGLPDTEKTKPDKRCH. 4 disulfides stabilise this stretch: Cys31–Cys79, Cys35–Cys55, Cys41–Cys62, and Cys45–Cys64.

It belongs to the long (4 C-C) scorpion toxin superfamily. Sodium channel inhibitor family. Alpha subfamily. In terms of tissue distribution, expressed by the venom gland.

Its subcellular location is the secreted. Functionally, binds voltage-independently at site-3 of voltage-gated sodium channels (Nav) and inhibits the inactivation of the activated channels, thereby blocking neuronal transmission. The protein is Neurotoxin LmNaTx10 of Lychas mucronatus (Chinese swimming scorpion).